A 463-amino-acid chain; its full sequence is Female germline-specific tumor suppressor gld-1 (463 aa).

The span at 1–10 shows a compositional bias: polar residues; that stretch reads MPSCTTPTYG. The tract at residues 1-76 is disordered; sequence MPSCTTPTYG…RAPPPARLTL (76 aa). A compositionally biased stretch (low complexity) spans 11-31; sequence VSTQLESQSSESPSRSSVMTP. The tract at residues 135-205 is qua1 domain; involved in homodimerization; it reads PTATEPIEVE…PEPAGDMISI (71 aa). Residues 208–260 form the KH domain; sequence KIYVPKNEYPDYNFVGRILGPRGMTAKQLEQDTGCKIMVRGKGSMRDKSKESA. A qua2 domain; involved in RNA binding region spans residues 305–336; sequence APEGTDELKRKQLMELAIINGTYRPMKSPNPA. The tract at residues 443-463 is disordered; sequence NTNVSPSGASPSASSVNNTSF. Residues 447–457 are compositionally biased toward low complexity; the sequence is SPSGASPSASS.

As to quaternary structure, homodimer. In terms of processing, phosphorylated by cdk-2 which may negatively regulate its expression in distal mitotic germline cells. Undergoes proteasomal degradation in proximal oocytes following mating. As to expression, expressed in proximal and distal oocytes in female worms but is eliminated from proximal oocytes following mating.

In terms of biological role, RNA-binding protein which recognizes the 5'-UACUCAU-3' RNA consensus sequence. Binds sequences in both the 5'coding and the 3'-UTR region of rme-2 mRNA. Binds sequences in the 3'-UTR region of cye-1 mRNA. Binds to cyb-2.1, cyb-2.2 and cyb-3 mRNA. Binds sequences in the 3'-UTR region of tra-2 mRNA. Binds to the 3' UTR of Notch receptor homolog glp-1, thereby repressing glp-1 translation in the embryo. Binding to the glp-1 3' UTR is inhibited by pos-1 binding to an overlapping binding site in the glp-1 3' UTR. Germ line-specific tumor suppressor essential for oogenesis. Controls the spatial pattern of translation of multiple oogenesis specific mRNAs (e.g. yolk receptor rme-2) by repression of translation during early meiotic prophase (leptotene to pachytene) and then derepression of translation during diplotene/ diakinesis, following its degradation. Also functions to promote the male sexual fate in the hermaphrodite germline but not the male germline. Represses translation of the vacuolar ATPase component vha-13 in the distal gonad. Functions redundantly with gld-2 to promote the initiation of meiotic development and/or inhibit stem cell proliferation. By regulating cye-1 expression, prevents entry into mitosis in meiotic germline cells. The polypeptide is Female germline-specific tumor suppressor gld-1 (gld-1) (Caenorhabditis elegans).